The sequence spans 214 residues: Peptidyl-tRNA hydrolase (214 aa).

Y14 is a binding site for tRNA. H19 acts as the Proton acceptor in catalysis. TRNA contacts are provided by Y64, N66, and N113. The tract at residues R184–G214 is disordered.

It belongs to the PTH family. In terms of assembly, monomer.

It is found in the cytoplasm. It carries out the reaction an N-acyl-L-alpha-aminoacyl-tRNA + H2O = an N-acyl-L-amino acid + a tRNA + H(+). Its function is as follows. Hydrolyzes ribosome-free peptidyl-tRNAs (with 1 or more amino acids incorporated), which drop off the ribosome during protein synthesis, or as a result of ribosome stalling. Functionally, catalyzes the release of premature peptidyl moieties from peptidyl-tRNA molecules trapped in stalled 50S ribosomal subunits, and thus maintains levels of free tRNAs and 50S ribosomes. The protein is Peptidyl-tRNA hydrolase of Roseiflexus castenholzii (strain DSM 13941 / HLO8).